A 118-amino-acid chain; its full sequence is Holo-[acyl-carrier-protein] synthase (118 aa).

2 residues coordinate Mg(2+): Asp-8 and Glu-58.

It belongs to the P-Pant transferase superfamily. AcpS family. Mg(2+) serves as cofactor.

The protein resides in the cytoplasm. It carries out the reaction apo-[ACP] + CoA = holo-[ACP] + adenosine 3',5'-bisphosphate + H(+). Functionally, transfers the 4'-phosphopantetheine moiety from coenzyme A to a Ser of acyl-carrier-protein. The polypeptide is Holo-[acyl-carrier-protein] synthase (Streptococcus equi subsp. zooepidemicus (strain H70)).